Consider the following 1258-residue polypeptide: MRALLASQGICNFHNILSVELVRQAVPVFGYMYFPPTSEKVYGVGNDAILGNHHGHAHLHHHFHRGGNNNPTPIEISVGATSTRIEYSGTPVAVNDSAELVSQALGKLAVINKERYENITYNRYEFADAHQIVGQKINAPPLNYGSNVTQSLPNISSHEKRDDHEGNSTRRLVYSISPELAQAARILAESQPPTPSTGEEADLAMNVRMKYFAESNDTNTPQQAHRHSDGLSEYAVTWADEMPLANRTTVENDGKLLKRASSSDYWMANLEQRGASPYAPTGYKVFRNVKDYGAKGDGVTDDTAAINTAIADGNRCGADCSSSTVYPAVVFFPRGSYLVSSPIIQYYNTQFLGDPGDYPTILAAASFVGLGVITSDVYVGDQDEWYINTNNFLRSVRNFKMDITRTDPNAYVCAIHWQVAQGTSLENIDFYMSRAAGNTQQGIYMENGSGGFMANLTFVGGNFGAYLGNQQFTTSQLVFVQCKTAMQVHWDWAWTMQDVVIESCGTGILLTGGAGGSFSTGQGVGSLILVDAIIANTPTGIMTSLYGQNSTEFLLQNVGFFNVQKAIIAERFSDPILAGGNEVLIDAWGFGLYGNASGVFFAQENDLPVMKRPEALVGSNKYVKPNLFTRRRPQYYDLGGSQVIDVKAYGAKGDGVTDDTDALNSVLSTAANLSSIVFIPYGVYIIKDTLKVPEGSRIMGQAWSQIMATGAKFEDIEKPHVAVKIGDHGDEGIVEIQELLFTVSGPTAGAILVEWNIHESTQGSAGLWDSHFRVGGAKGSMLQAKDCPKRASTLNKNCIAASMLMHITQGASAYIWRDSWYREPTDIVGQRNFTGYYLYSKSRNNALLNRLSNTCQTAMTRLINCPDETYAFLGRGWPQSYTNKTIASMVCSRGCKDSIQSWYEEVTTHCKEFDTKEDVMNFRGGILWAGWNQTCLQSPQGGEYCSDVIAGFSPVKHAEEMLDSELCSYCYTTVLQMAQQSPYSFYDQSYQRLLNLTQERCGLTGATDIAKPVEDRSDDPNDFCASDIVYTTIQGDTCDSIAVTHTISSAALFIGSPEIIDCTDIRPGLSICLPFSCDNVYTYPANATCATIEDSFGMDSGVIRRLNPWIDGGCTNLQEWSVNYGHVLCVSPQAGTHTHMAPPPGVTSLPGSDTGFTDQDIAPPANSTVANGTTMSCGRWHVARDQDTCTAICVQGGIEFSLFLAVNPSLSADSCTTELQMGAAYCTGPTQGWGLVRPNSTTPRSSVVATNTALDLGI.

The disordered stretch occupies residues 148–168; the sequence is VTQSLPNISSHEKRDDHEGNS. Positions 157–168 are enriched in basic and acidic residues; the sequence is SHEKRDDHEGNS. LysM domains are found at residues 1028–1073 and 1179–1227; these read IVYT…SICL and RWHV…AYCT.

The protein belongs to the secreted LysM effector family.

Its function is as follows. Non-secreted LysM effector that might be involved in manipulation of host defenses for successful infection. In Penicillium expansum (Blue mold rot fungus), this protein is Non-secreted LysM effector LysM19.